Here is a 496-residue protein sequence, read N- to C-terminus: Probable diguanylate cyclase DgcJ (496 aa).

Transmembrane regions (helical) follow at residues 11–31 (FIAA…LVAS) and 305–325 (ILYF…TALI). The GGDEF domain occupies 374 to 496 (SSVMFIAIDM…VNKQNKNSRS (123 aa)). Residue D382 coordinates Mg(2+). 3 residues coordinate substrate: N390, H395, and D399. D425 contributes to the Mg(2+) binding site. Catalysis depends on D425, which acts as the Proton acceptor.

Homodimer. It depends on Mg(2+) as a cofactor.

It is found in the cell inner membrane. It carries out the reaction 2 GTP = 3',3'-c-di-GMP + 2 diphosphate. Its pathway is purine metabolism; 3',5'-cyclic di-GMP biosynthesis. Its function is as follows. Catalyzes the synthesis of cyclic-di-GMP (c-di-GMP) via the condensation of 2 GTP molecules. This Escherichia coli (strain K12) protein is Probable diguanylate cyclase DgcJ.